The primary structure comprises 295 residues: Enolase-phosphatase E1 (295 aa).

Positions 20 and 22 each coordinate Mg(2+). Residues 153-154 (SS) and lysine 187 contribute to the substrate site. Aspartate 212 lines the Mg(2+) pocket. Residues 260–295 (ETKEENGGATNGKRKIEETNDDVAEEDKAQVYPNKK) are disordered.

Belongs to the HAD-like hydrolase superfamily. MasA/MtnC family. As to quaternary structure, monomer. It depends on Mg(2+) as a cofactor.

It is found in the cytoplasm. The protein resides in the nucleus. It carries out the reaction 5-methylsulfanyl-2,3-dioxopentyl phosphate + H2O = 1,2-dihydroxy-5-(methylsulfanyl)pent-1-en-3-one + phosphate. It functions in the pathway amino-acid biosynthesis; L-methionine biosynthesis via salvage pathway; L-methionine from S-methyl-5-thio-alpha-D-ribose 1-phosphate: step 3/6. The protein operates within amino-acid biosynthesis; L-methionine biosynthesis via salvage pathway; L-methionine from S-methyl-5-thio-alpha-D-ribose 1-phosphate: step 4/6. Bifunctional enzyme that catalyzes the enolization of 2,3-diketo-5-methylthiopentyl-1-phosphate (DK-MTP-1-P) into the intermediate 2-hydroxy-3-keto-5-methylthiopentenyl-1-phosphate (HK-MTPenyl-1-P), which is then dephosphorylated to form the acireductone 1,2-dihydroxy-3-keto-5-methylthiopentene (DHK-MTPene). In Anopheles gambiae (African malaria mosquito), this protein is Enolase-phosphatase E1.